Here is a 433-residue protein sequence, read N- to C-terminus: Malate synthase (433 aa).

Acetyl-CoA is bound at residue T16–S17. D52 is a Mg(2+) binding site. R84 lines the acetyl-CoA pocket. Glyoxylate-binding positions include R84, E158, and V191–D192. Residues E158 and D192 each contribute to the Mg(2+) site. 2 residues coordinate acetyl-CoA: R236 and L259. D388 acts as the Proton acceptor in catalysis.

It belongs to the HpcH/HpaI aldolase family. In terms of assembly, homotrimer and homohexamer in equilibrium. It depends on Mg(2+) as a cofactor.

It is found in the cytoplasm. The catalysed reaction is glyoxylate + acetyl-CoA + H2O = (S)-malate + CoA + H(+). It participates in carbohydrate metabolism; glyoxylate cycle; (S)-malate from isocitrate: step 2/2. Functionally, involved in the glyoxylate cycle which synthesizes precursors for carbohydrates from C2 compounds such as acetate. Catalyzes the Claisen condensation between acetyl-coenzyme A (acetyl-CoA) and glyoxylate to form the malyl-CoA intermediate that is subsequently hydrolyzed to produce malate and CoA. This is Malate synthase (aceB) from Haloferax volcanii (strain ATCC 29605 / DSM 3757 / JCM 8879 / NBRC 14742 / NCIMB 2012 / VKM B-1768 / DS2) (Halobacterium volcanii).